Reading from the N-terminus, the 221-residue chain is Eukaryotic translation initiation factor 3 subunit K (221 aa).

Residues 46–207 (YDLEANLACL…NIKTKHITEK (162 aa)) form the PCI domain.

This sequence belongs to the eIF-3 subunit K family. Component of the eukaryotic translation initiation factor 3 (eIF-3) complex.

The protein resides in the cytoplasm. Component of the eukaryotic translation initiation factor 3 (eIF-3) complex, which is involved in protein synthesis of a specialized repertoire of mRNAs and, together with other initiation factors, stimulates binding of mRNA and methionyl-tRNAi to the 40S ribosome. The eIF-3 complex specifically targets and initiates translation of a subset of mRNAs involved in cell proliferation. The polypeptide is Eukaryotic translation initiation factor 3 subunit K (Culex quinquefasciatus (Southern house mosquito)).